A 962-amino-acid polypeptide reads, in one-letter code: Glycine dehydrogenase (decarboxylating) (962 aa).

Position 709 is an N6-(pyridoxal phosphate)lysine (Lys709).

It belongs to the GcvP family. The glycine cleavage system is composed of four proteins: P, T, L and H. It depends on pyridoxal 5'-phosphate as a cofactor.

The enzyme catalyses N(6)-[(R)-lipoyl]-L-lysyl-[glycine-cleavage complex H protein] + glycine + H(+) = N(6)-[(R)-S(8)-aminomethyldihydrolipoyl]-L-lysyl-[glycine-cleavage complex H protein] + CO2. In terms of biological role, the glycine cleavage system catalyzes the degradation of glycine. The P protein binds the alpha-amino group of glycine through its pyridoxal phosphate cofactor; CO(2) is released and the remaining methylamine moiety is then transferred to the lipoamide cofactor of the H protein. This Shewanella sp. (strain ANA-3) protein is Glycine dehydrogenase (decarboxylating).